The primary structure comprises 479 residues: MSATALQVKTTQKPNSRLALEVAVPAERCQANYEAAVTRLSRTINLPGFRKGKVPRAVLLQQIGLVRIRATALETLVDAVWREVLEQESIEPLCEPELSGGFDALLESFQPGEALTLILETDVTPTPKLKATKGLQAEAEVVTFDPSKVDELIEQSRKQLATLVPVESRPAAIGDIAVVSFSGTYDDDGSAIEGGSSESMDVDLEDGQMIPGFVEGIIGMSLGSEKTVDCHFPDDYSKEDARGRKASFVINLKELKTRELPDLDDAFAQQSSDKATLEELRNDLEQRLQEDAKRRDRSNRHDALLEALTEQLEVDLPNTLVQQEIRNLVEQTASQFAQQGMDVKSMFTPELVRSLMESSRPEAEERLRRSLALTALAESEDLKIEESEISAKVKEVSRELSGERDIDPARLRQAVSDDLLKDKLLDWLEDNSTITEKVLESEAKTSKPAAKSKGSKTKSTKTKTNKAKTEKPASDKTKS.

A PPIase FKBP-type domain is found at 174-261; that stretch reads GDIAVVSFSG…LKELKTRELP (88 aa). A disordered region spans residues 437-479; the sequence is KVLESEAKTSKPAAKSKGSKTKSTKTKTNKAKTEKPASDKTKS. Residues 453–466 are compositionally biased toward basic residues; the sequence is KGSKTKSTKTKTNK. The segment covering 467–479 has biased composition (basic and acidic residues); sequence AKTEKPASDKTKS.

It belongs to the FKBP-type PPIase family. Tig subfamily.

Its subcellular location is the cytoplasm. The enzyme catalyses [protein]-peptidylproline (omega=180) = [protein]-peptidylproline (omega=0). Functionally, involved in protein export. Acts as a chaperone by maintaining the newly synthesized protein in an open conformation. Functions as a peptidyl-prolyl cis-trans isomerase. This Prochlorococcus marinus (strain MIT 9303) protein is Trigger factor.